Here is a 516-residue protein sequence, read N- to C-terminus: H/ACA ribonucleoprotein complex subunit DKC1 (516 aa).

The interval 1 to 24 (MADGDGSSVKKRRKKDKRSLPDED) is disordered. Residue D123 is the Nucleophile of the active site. A PUA domain is found at 294-369 (HKRLVMKDSA…VVAKIKRVIM (76 aa)). Residues 422-516 (KKEAAKVPQA…KQKEVEESSE (95 aa)) form a disordered region. Residues 434 to 446 (EVERAPKRKRESE) show a composition bias toward basic and acidic residues. The segment covering 453 to 464 (SPPPSPATPPPE) has biased composition (pro residues). Residues 463 to 516 (PEELSKKEKKKKKKEKKAKEAAESGEEQVEVISESSAKKKKKKKKQKEVEESSE) are a coiled coil. Over residues 469-478 (KEKKKKKKEK) the composition is skewed to basic residues.

Belongs to the pseudouridine synthase TruB family. As to quaternary structure, part of the H/ACA small nucleolar ribonucleoprotein (H/ACA snoRNP) complex, which contains NHP2/NOLA2, GAR1/NOLA1, NOP10/NOLA3, and DKC1/NOLA4, which is presumed to be the catalytic subunit. The complex contains a stable core formed by binding of one or two NOP10-DKC1 heterodimers to NHP2; GAR1 subsequently binds to this core via DKC1. The complex binds a box H/ACA small nucleolar RNA (snoRNA), which may target the specific site of modification within the RNA substrate.

It is found in the nucleus. The protein resides in the nucleolus. Its subcellular location is the cajal body. It carries out the reaction uridine in 5S rRNA = pseudouridine in 5S rRNA. Catalytic subunit of H/ACA small nucleolar ribonucleoprotein (H/ACA snoRNP) complex, which catalyzes pseudouridylation of rRNA. This involves the isomerization of uridine such that the ribose is subsequently attached to C5, instead of the normal N1. Each rRNA can contain up to 100 pseudouridine ('psi') residues, which may serve to stabilize the conformation of rRNAs. Required for ribosome biogenesis and telomere maintenance. This Gallus gallus (Chicken) protein is H/ACA ribonucleoprotein complex subunit DKC1 (DKC1).